A 118-amino-acid chain; its full sequence is MLTREDIFKHVKEKYGTSPDYPWEKYPNYASLRHTSNKKWYGLIMNVLPEKLGLDGHGEIDILNLKCPPEISDRLRNGENILPGYHMDKEHWISIVLERTDPEGEIYNLIEQSFHLTK.

This is an uncharacterized protein from Bacillus subtilis (strain 168).